A 119-amino-acid chain; its full sequence is Histone H1B, sperm (119 aa).

The H15 domain occupies 8–77 (THPPVATAVV…QNKGSFRVNK (70 aa)). The segment at 76–119 (NKTALPKKKKAAKKPKAKKVKKPKSAAKKKTNRARAPKTKKNRN) is disordered. A compositionally biased stretch (basic residues) spans 80 to 119 (LPKKKKAAKKPKAKKVKKPKSAAKKKTNRARAPKTKKNRN).

It belongs to the histone H1/H5 family.

The protein localises to the nucleus. Its subcellular location is the chromosome. Histones H1 are necessary for the condensation of nucleosome chains into higher-order structures. In Platynereis dumerilii (Dumeril's clam worm), this protein is Histone H1B, sperm.